A 1362-amino-acid chain; its full sequence is Leptomycin B resistance protein pmd1 (1362 aa).

The interval 1-45 (MSLHSKKSTSTVKDNEHSLDLSIKSIPSNEKNFSTEKSENEASES) is disordered. The Cytoplasmic portion of the chain corresponds to 1–91 (MSLHSKKSTS…RILSYADKWD (91 aa)). Positions 33-45 (FSTEKSENEASES) are enriched in basic and acidic residues. 6 helical membrane passes run 92 to 115 (IMLQLAGTITGIGAGLGMPLMSLV), 138 to 162 (TVDHFCLYFIYIAIGVFGCSYIYTV), 220 to 237 (LVFFAIATFVSGFVIAFI), 244 to 264 (LILSSMFPAICGGIGLGVPFI), 320 to 346 (AIAMGLMVGWMFFVAYGVYGLAFWEGG), and 354 to 374 (LDVSKLIGCFFAVLIASYSLA). The 291-residue stretch at 95–385 (QLAGTITGIG…ISPKMQSFVS (291 aa)) folds into the ABC transmembrane type-1 1 domain. Over 375–788 (NISPKMQSFV…LWFIHSFVRT (414 aa)) the chain is Cytoplasmic. In terms of domain architecture, ABC transporter 1 spans 420–665 (IELKNIRFVY…NGAYARLVEA (246 aa)). An ATP-binding site is contributed by 455 to 462 (GASGSGKS). Residues 748-768 (LPPADVGELNEEPKKSKKSKK) are disordered. Helical transmembrane passes span 789-809 (MIEIICLLIGILASMICGAAY), 835-859 (VNVFAVYWLILAIVQFFAYAISNFA), 916-935 (LGTFFQILTNIISVTILSLA), 940-957 (LGLVTLSTSPVIITAGYY), 1022-1040 (GLFFSAAQGVTFLINALTF), and 1054-1072 (IVQFYTCFIAIVFGIQQAG). Residues 795-1083 (LLIGILASMI…FFGYSADVTK (289 aa)) enclose the ABC transmembrane type-1 2 domain. Over 1073 to 1362 (QFFGYSADVT…LVVEQGLNKA (290 aa)) the chain is Cytoplasmic. Positions 1119-1356 (IEFRQVEFSY…RGRYYELVVE (238 aa)) constitute an ABC transporter 2 domain. 1154-1161 (GSSGCGKS) provides a ligand contact to ATP.

This sequence belongs to the ABC transporter superfamily. ABCB family. Multidrug resistance exporter (TC 3.A.1.201) subfamily.

It is found in the membrane. Functionally, may be a transmembrane transporter of the mating factor, namely P-factor or M-factor. Confers resistance to leptomycin B and to several other antifungal drugs. This is Leptomycin B resistance protein pmd1 (pmd1) from Schizosaccharomyces pombe (strain 972 / ATCC 24843) (Fission yeast).